The following is a 797-amino-acid chain: Mitochondrial inner membrane m-AAA protease component AFG3L2 (797 aa).

A mitochondrion-targeting transit peptide spans 1–38 (MAHRCLRLWGRGGCWPRGLQQLLVPGGVGPGEQPCLRT). The propeptide at 39 to 66 (LYRFVTTQARASRNSLLTDIIAAYQRFC) is removed in mature form. At 39–142 (LYRFVTTQAR…KGDIPWDDKD (104 aa)) the chain is on the mitochondrial matrix side. The segment at 76 to 126 (YFPNGKNGKKASEPKEVMGEKKESKPAATTRSSGGGGGGGGKRGGKKDDSH) is disordered. Basic and acidic residues predominate over residues 85 to 100 (KASEPKEVMGEKKESK). Residues 108 to 117 (SGGGGGGGGK) show a composition bias toward gly residues. An N6-succinyllysine modification is found at Lys-117. Residues 143–163 (FRMFFLWTALFWGGVMFYLLL) traverse the membrane as a helical segment. Residues 164 to 250 (KRSGREITWK…VPVVYIAESD (87 aa)) lie on the Mitochondrial intermembrane side of the membrane. Residues 251–271 (GSFLLSMLPTVLIIAFLLYTI) traverse the membrane as a helical segment. Over 272–797 (RRGPAGIGRT…EEPPGEKVAN (526 aa)) the chain is Mitochondrial matrix. Residues Val-310, Ala-311, Thr-352, Gly-353, Lys-354, Thr-355, Leu-356, and His-490 each contribute to the ATP site. Residue His-574 participates in Zn(2+) binding. The active site involves Glu-575. His-578 and Asp-649 together coordinate Zn(2+). Residues 759 to 797 (FVEGTGSLDEDTSLPEGLKDWNKEREKEKEEPPGEKVAN) form a disordered region. Over residues 775–797 (GLKDWNKEREKEKEEPPGEKVAN) the composition is skewed to basic and acidic residues.

The protein in the N-terminal section; belongs to the AAA ATPase family. It in the C-terminal section; belongs to the peptidase M41 family. In terms of assembly, homohexamer. Forms heterohexamers with SPG7. The m-AAA protease is either composed of homohexamers of AFG3L2 or heterohexamers of AFG3L2 and SPG7. Interacts with MAIP1. Interacts with DNAJC19. Interacts with PHB2. Requires Zn(2+) as cofactor. Post-translationally, upon import into the mitochondrion, the N-terminal transit peptide is cleaved to generate an intermediate form which undergoes autocatalytic proteolytic processing to generate the proteolytically active mature form. Ubiquitous. Highly expressed in the cerebellar Purkinje cells.

It localises to the mitochondrion inner membrane. It catalyses the reaction ATP + H2O = ADP + phosphate + H(+). Functionally, catalytic component of the m-AAA protease, a protease that plays a key role in proteostasis of inner mitochondrial membrane proteins, and which is essential for axonal and neuron development. AFG3L2 possesses both ATPase and protease activities: the ATPase activity is required to unfold substrates, threading them into the internal proteolytic cavity for hydrolysis into small peptide fragments. The m-AAA protease carries out quality control in the inner membrane of the mitochondria by mediating degradation of mistranslated or misfolded polypeptides. The m-AAA protease complex also promotes the processing and maturation of mitochondrial proteins, such as MRPL32/bL32m, PINK1 and SP7. Mediates protein maturation of the mitochondrial ribosomal subunit MRPL32/bL32m by catalyzing the cleavage of the presequence of MRPL32/bL32m prior to assembly into the mitochondrial ribosome. Required for SPG7 maturation into its active mature form after SPG7 cleavage by mitochondrial-processing peptidase (MPP). Required for the maturation of PINK1 into its 52kDa mature form after its cleavage by mitochondrial-processing peptidase (MPP). Acts as a regulator of calcium in neurons by mediating degradation of SMDT1/EMRE before its assembly with the uniporter complex, limiting the availability of SMDT1/EMRE for MCU assembly and promoting efficient assembly of gatekeeper subunits with MCU. Promotes the proteolytic degradation of GHITM upon hyperpolarization of mitochondria: progressive GHITM degradation leads to respiratory complex I degradation and broad reshaping of the mitochondrial proteome by AFG3L2. Also acts as a regulator of mitochondrial glutathione homeostasis by mediating cleavage and degradation of SLC25A39. SLC25A39 cleavage is prevented when SLC25A39 binds iron-sulfur. Involved in the regulation of OMA1-dependent processing of OPA1. May act by mediating processing of OMA1 precursor, participating in OMA1 maturation. This Homo sapiens (Human) protein is Mitochondrial inner membrane m-AAA protease component AFG3L2.